The chain runs to 597 residues: MFS-type transporter FPY5 (597 aa).

Residues 1–55 form a disordered region; sequence MSETTGLPLKHLQGSPPGTPVNTNNESNEASPDDGCRLPDTVTEAEASSDNHGSV. 2 stretches are compositionally biased toward polar residues: residues 20–30 and 46–55; these read PVNTNNESNEA and EASSDNHGSV. Asparagine 25 carries N-linked (GlcNAc...) asparagine glycosylation. Asparagine 72 carries N-linked (GlcNAc...) asparagine glycosylation. A run of 9 helical transmembrane segments spans residues 94 to 114, 120 to 140, 147 to 167, 183 to 203, 214 to 234, 241 to 261, 286 to 306, 316 to 336, and 360 to 380; these read LSLL…VSIV, FNMA…FLII, IFGC…FSMA, FQGM…PLMV, IMSS…GAIT, WVFY…AFSV, VDFV…FALE, SGAI…FIAW, and FVMG…AALI. An N-linked (GlcNAc...) asparagine glycan is attached at asparagine 390. The next 5 membrane-spanning stretches (helical) occupy residues 402–422, 424–444, 463–483, 498–518, and 562–582; these read LPLL…VSKL, VPPL…VGLY, IMGL…PLVV, IRVL…INHI, and EQMR…VLLV.

The protein belongs to the major facilitator superfamily. TCR/Tet family.

The protein localises to the membrane. The protein operates within secondary metabolite biosynthesis. In terms of biological role, MFS-type transporter; part of the gene cluster that mediates the biosynthesis of the gamma-pyrones fusapyrone (FPY) and deoxyfusapyrone (dFPY). This chain is MFS-type transporter FPY5, found in Fusarium mangiferae (Mango malformation disease fungus).